A 370-amino-acid polypeptide reads, in one-letter code: MDLLKSPLYSKYVESNAKLVDFAGWEMPISFSGLIKEHESVRYSAGLFDISHMGVISIKGINPKDYIQKLFPTNLYSFCEGQGLYTVMLNDKGGIIDDLIIYDLGIQKNDISELLLIVNASRYEEDFQWIKNNLNMSEISITNFKKDKVLLALQGKNSFGLFEEWIESSISHIPNFGCEYKIFEHISPKEKIFFSKTGYTGENGLEILLSKKAAINLWDFLISKNVAPCGLGARDTLRLEAGMHLYGQDINEETSPYEAGLGWLVHLENNHEFIGRRVLEEQSRLGIQKKLVGLSIKGKAIGRKGCAVLKGDENIGTITSGSWSPTKHQAIAFAYINTSHALINNEVEILIRGKKFNGVITKRAFYKKNY.

The protein belongs to the GcvT family. The glycine cleavage system is composed of four proteins: P, T, L and H.

It catalyses the reaction N(6)-[(R)-S(8)-aminomethyldihydrolipoyl]-L-lysyl-[protein] + (6S)-5,6,7,8-tetrahydrofolate = N(6)-[(R)-dihydrolipoyl]-L-lysyl-[protein] + (6R)-5,10-methylene-5,6,7,8-tetrahydrofolate + NH4(+). Functionally, the glycine cleavage system catalyzes the degradation of glycine. In Prochlorococcus marinus (strain AS9601), this protein is Aminomethyltransferase.